Here is a 372-residue protein sequence, read N- to C-terminus: Putative F-box/kelch-repeat protein At3g22730 (372 aa).

The region spanning methionine 1–alanine 50 is the F-box domain. Kelch repeat units follow at residues isoleucine 155–glycine 204, alanine 245–glycine 293, and lysine 324–glutamate 372.

The sequence is that of Putative F-box/kelch-repeat protein At3g22730 from Arabidopsis thaliana (Mouse-ear cress).